The sequence spans 61 residues: Outer membrane lipoprotein YnbE (61 aa).

The N-terminal stretch at 1-16 is a signal peptide; sequence MKILLAALTSSFMLVG. Residue cysteine 17 is the site of N-palmitoyl cysteine attachment. A lipid anchor (S-diacylglycerol cysteine) is attached at cysteine 17.

The protein belongs to the lipoprotein YnbE family. In terms of assembly, interacts with the C-terminal region of the probable phospholipid transport protein YdbH.

It is found in the cell outer membrane. Functionally, involved in outer membrane lipid homeostasis. Interacts with the inner membrane protein YdbH to form a functional protein bridge connecting the inner and outer membranes of the cell. Is required for YdbH's function and may facilitate phospholipid transport through the periplasm. The sequence is that of Outer membrane lipoprotein YnbE (ynbE) from Escherichia coli O6:H1 (strain CFT073 / ATCC 700928 / UPEC).